Reading from the N-terminus, the 239-residue chain is Proteasome subunit beta type-6 (239 aa).

A2 bears the N-acetylalanine mark. Positions 2-34 are cleaved as a propeptide — removed in mature form; sequence AATLVAARGTRPAPAWGPEAIAPDWENREVSTG. Catalysis depends on T35, which acts as the Nucleophile. T69 bears the Phosphothreonine mark.

The protein belongs to the peptidase T1B family. The 26S proteasome consists of a 20S proteasome core and two 19S regulatory subunits. The 20S proteasome core is a barrel-shaped complex made of 28 subunits that are arranged in four stacked rings. The two outer rings are each formed by seven alpha subunits, and the two inner rings are formed by seven beta subunits. The proteolytic activity is exerted by three beta-subunits PSMB5, PSMB6 and PSMB7.

The protein localises to the cytoplasm. The protein resides in the nucleus. It catalyses the reaction Cleavage of peptide bonds with very broad specificity.. Its function is as follows. Component of the 20S core proteasome complex involved in the proteolytic degradation of most intracellular proteins. This complex plays numerous essential roles within the cell by associating with different regulatory particles. Associated with two 19S regulatory particles, forms the 26S proteasome and thus participates in the ATP-dependent degradation of ubiquitinated proteins. The 26S proteasome plays a key role in the maintenance of protein homeostasis by removing misfolded or damaged proteins that could impair cellular functions, and by removing proteins whose functions are no longer required. Associated with the PA200 or PA28, the 20S proteasome mediates ubiquitin-independent protein degradation. This type of proteolysis is required in several pathways including spermatogenesis (20S-PA200 complex) or generation of a subset of MHC class I-presented antigenic peptides (20S-PA28 complex). Within the 20S core complex, PSMB6 displays a peptidylglutamyl-hydrolyzing activity also termed postacidic or caspase-like activity, meaning that the peptides bond hydrolysis occurs directly after acidic residues. This Bos taurus (Bovine) protein is Proteasome subunit beta type-6 (PSMB6).